The sequence spans 598 residues: Urease subunit alpha (598 aa).

One can recognise a Urease domain in the interval 136 to 598 (GGLDTHVHWL…APLAQRYFLF (463 aa)). Ni(2+) contacts are provided by H141, H143, and K223. An N6-carboxylysine modification is found at K223. H225 is a substrate binding site. Residues H252 and H278 each coordinate Ni(2+). The Proton donor role is filled by H326. A Ni(2+)-binding site is contributed by D366.

This sequence belongs to the metallo-dependent hydrolases superfamily. Urease alpha subunit family. Heterotrimer of UreA (gamma), UreB (beta) and UreC (alpha) subunits. Three heterotrimers associate to form the active enzyme. Ni cation serves as cofactor. In terms of processing, carboxylation allows a single lysine to coordinate two nickel ions.

It localises to the cytoplasm. It catalyses the reaction urea + 2 H2O + H(+) = hydrogencarbonate + 2 NH4(+). It participates in nitrogen metabolism; urea degradation; CO(2) and NH(3) from urea (urease route): step 1/1. The polypeptide is Urease subunit alpha (Ureaplasma urealyticum serovar 10 (strain ATCC 33699 / Western)).